The primary structure comprises 313 residues: Fructose-1,6-bisphosphatase class 1 (313 aa).

Mg(2+) is bound by residues glutamate 91, aspartate 112, leucine 114, and aspartate 115. Substrate is bound by residues 115 to 118 (DGSS), tyrosine 223, and lysine 254. Position 260 (glutamate 260) interacts with Mg(2+).

The protein belongs to the FBPase class 1 family. In terms of assembly, homotetramer. Requires Mg(2+) as cofactor.

The protein localises to the cytoplasm. It catalyses the reaction beta-D-fructose 1,6-bisphosphate + H2O = beta-D-fructose 6-phosphate + phosphate. It participates in carbohydrate biosynthesis; gluconeogenesis. In Geobacter sulfurreducens (strain ATCC 51573 / DSM 12127 / PCA), this protein is Fructose-1,6-bisphosphatase class 1.